We begin with the raw amino-acid sequence, 412 residues long: Alpha-1-antiproteinase (412 aa).

The signal sequence occupies residues 1 to 24 (MTPSISWGLLLLAGLFCLVPSFLA). Ser33 carries the post-translational modification Phosphoserine. 4 N-linked (GlcNAc...) asparagine glycosylation sites follow: Asn100, Asn133, Asn264, and Asn313. The interval 367 to 386 (AATVLQAVPMSMPPILNFNK) is RCL. Ser377 carries the post-translational modification Phosphoserine.

The protein belongs to the serpin family. As to quaternary structure, interacts with CELA2A. Interacts with ERGIC3 and LMAN1/ERGIC53. Interacts with PRSS1/Trypsin. In terms of tissue distribution, expressed not only in liver but also in kidney tubule cells, where it is regulated by androgens during development.

Its subcellular location is the secreted. In terms of biological role, inhibitor of serine proteases. Its primary target is elastase, but it also has a moderate affinity for plasmin and thrombin. The chain is Alpha-1-antiproteinase (Serpina1) from Mus caroli (Ryukyu mouse).